The chain runs to 399 residues: Lymphoid enhancer-binding factor 1 (399 aa).

Residues 1–14 (MPQLSGGGGGGGGD) show a composition bias toward gly residues. A CTNNB1-binding region spans residues 1–62 (MPQLSGGGGG…IKSSLVNESE (62 aa)). Positions 1-104 (MPQLSGGGGG…KHPDGGLYNK (104 aa)) are disordered. Composition is skewed to basic and acidic residues over residues 24 to 45 (IPFK…SHPE) and 82 to 98 (PYHD…KHPD). Lys27 participates in a covalent cross-link: Glycyl lysine isopeptide (Lys-Gly) (interchain with G-Cter in SUMO). Ser132 carries the phosphoserine modification. At Thr155 the chain carries Phosphothreonine; by NLK. The residue at position 166 (Ser166) is a Phosphoserine; by NLK. 2 disordered regions span residues 166–192 (SPGS…PAPD) and 268–298 (VKQE…KRPH). Residue Lys269 forms a Glycyl lysine isopeptide (Lys-Gly) (interchain with G-Cter in SUMO) linkage. Residues 269–296 (KQEHPHTDSDLMHVKPQHEQRKEQEPKR) show a composition bias toward basic and acidic residues. A DNA-binding region (HMG box) is located at residues 299 to 367 (IKKPLNAFML…LHMQLYPGWS (69 aa)). Residues 369-399 (RDNYGKKKKRKREKLQESASGTGPRMTAAYI) are disordered.

This sequence belongs to the TCF/LEF family. Binds the armadillo repeat of CTNNB1 and forms a stable complex. Interacts with EP300, TLE1 and PIASG. Binds ALYREF/THOC4, MDFI and MDFIC. Interacts with NLK. Interacts with DAZAP2. In terms of processing, phosphorylated at Thr-155 and/or Ser-166 by NLK. Phosphorylation by NLK at these sites represses LEF1-mediated transcriptional activation of target genes of the canonical Wnt signaling pathway. As to expression, detected in thymus. Not detected in normal colon, but highly expressed in colon cancer biopsies and colon cancer cell lines. Expressed in several pancreatic tumors and weakly expressed in normal pancreatic tissue. Isoforms 1 and 5 are detected in several pancreatic cell lines.

It is found in the nucleus. Transcription factor that binds DNA in a sequence-specific manner. Participates in the Wnt signaling pathway. Activates transcription of target genes in the presence of CTNNB1 and EP300. PIAG antagonizes both Wnt-dependent and Wnt-independent activation by LEF1. TLE1, TLE2, TLE3 and TLE4 repress transactivation mediated by LEF1 and CTNNB1. Regulates T-cell receptor alpha enhancer function. Required for IL17A expressing gamma-delta T-cell maturation and development, via binding to regulator loci of BLK to modulate expression. Acts as a positive regulator of odontoblast differentiation during mesenchymal tooth germ formation, expression is repressed during the bell stage by MSX1-mediated inhibition of CTNNB1 signaling. May play a role in hair cell differentiation and follicle morphogenesis. In terms of biological role, transcriptionally activates MYC and CCND1 expression and enhances proliferation of pancreatic tumor cells. Functionally, lacks the CTNNB1 interaction domain and may therefore be an antagonist for Wnt signaling. Its function is as follows. Transcriptionally activates the fibronectin promoter, binds to and represses transcription from the E-cadherin promoter in a CTNNB1-independent manner, and is involved in reducing cellular aggregation and increasing cell migration of pancreatic cancer cells. This is Lymphoid enhancer-binding factor 1 from Homo sapiens (Human).